We begin with the raw amino-acid sequence, 1110 residues long: Serine/threonine-protein kinase PknK (1110 aa).

The region spanning 26-283 is the Protein kinase domain; it reads FDNVEEIGRG…TAADVGEELR (258 aa). ATP contacts are provided by residues 32–40 and Lys55; that span reads IGRGGFGVV. Asp149 functions as the Proton acceptor in the catalytic mechanism. Mg(2+)-binding residues include Asn154 and Asp167. A phosphothreonine; by autocatalysis mark is found at Thr179 and Thr181. Residues 308–343 form a disordered region; sequence RSPEAHAAHRHTGGGTPTVPTPPTPATKYRPSVPTG.

This sequence belongs to the protein kinase superfamily. Ser/Thr protein kinase family. Forms oligomeric complexes in solution. In terms of processing, can autophosphorylate the carboxyl terminal region in addition to Thr-179 and Thr-181.

It is found in the cytoplasm. The protein localises to the cell membrane. Its subcellular location is the secreted. The protein resides in the cell wall. It catalyses the reaction L-seryl-[protein] + ATP = O-phospho-L-seryl-[protein] + ADP + H(+). The enzyme catalyses L-threonyl-[protein] + ATP = O-phospho-L-threonyl-[protein] + ADP + H(+). Its function is as follows. Key microbial factor involved in regulation of early and late events in tuberculosis infection, and in host-pathogen interactions. This is Serine/threonine-protein kinase PknK (pknK) from Mycobacterium tuberculosis (strain CDC 1551 / Oshkosh).